The chain runs to 572 residues: Sulfite reductase [NADPH] hemoprotein beta-component (572 aa).

[4Fe-4S] cluster is bound by residues cysteine 437, cysteine 443, cysteine 482, and cysteine 486. Cysteine 486 contacts siroheme.

The protein belongs to the nitrite and sulfite reductase 4Fe-4S domain family. Alpha(8)-beta(8). The alpha component is a flavoprotein, the beta component is a hemoprotein. Requires siroheme as cofactor. [4Fe-4S] cluster serves as cofactor.

It catalyses the reaction hydrogen sulfide + 3 NADP(+) + 3 H2O = sulfite + 3 NADPH + 4 H(+). Its pathway is sulfur metabolism; hydrogen sulfide biosynthesis; hydrogen sulfide from sulfite (NADPH route): step 1/1. Its function is as follows. Component of the sulfite reductase complex that catalyzes the 6-electron reduction of sulfite to sulfide. This is one of several activities required for the biosynthesis of L-cysteine from sulfate. This is Sulfite reductase [NADPH] hemoprotein beta-component from Lysinibacillus sphaericus (strain C3-41).